A 158-amino-acid chain; its full sequence is NADH-quinone oxidoreductase subunit B (158 aa).

Residues Cys-37, Cys-38, Cys-102, and Cys-132 each contribute to the [4Fe-4S] cluster site.

It belongs to the complex I 20 kDa subunit family. In terms of assembly, NDH-1 is composed of 14 different subunits. Subunits NuoB, C, D, E, F, and G constitute the peripheral sector of the complex. Requires [4Fe-4S] cluster as cofactor.

The protein resides in the cell inner membrane. The catalysed reaction is a quinone + NADH + 5 H(+)(in) = a quinol + NAD(+) + 4 H(+)(out). Functionally, NDH-1 shuttles electrons from NADH, via FMN and iron-sulfur (Fe-S) centers, to quinones in the respiratory chain. The immediate electron acceptor for the enzyme in this species is believed to be ubiquinone. Couples the redox reaction to proton translocation (for every two electrons transferred, four hydrogen ions are translocated across the cytoplasmic membrane), and thus conserves the redox energy in a proton gradient. The sequence is that of NADH-quinone oxidoreductase subunit B from Halorhodospira halophila (strain DSM 244 / SL1) (Ectothiorhodospira halophila (strain DSM 244 / SL1)).